A 640-amino-acid chain; its full sequence is RNA polymerase II elongation factor ELL2 (640 aa).

3 disordered regions span residues 172-202 (AVSD…STIS), 290-320 (KLNP…PQKR), and 343-490 (RVPP…EEDL). Polar residues-rich tracts occupy residues 184–202 (TPMN…STIS) and 291–318 (LNPS…SSPQ). Positions 360–372 (AAGLPLPPAAAAI) are enriched in low complexity. Residues 391-401 (IVNSNSNSPST) are compositionally biased toward polar residues. Positions 457-470 (MSHKKSKKKSKKHK) are enriched in basic residues. Residues 471 to 490 (EKDQIKKHDIETIEEKEEDL) are compositionally biased toward basic and acidic residues. Phosphoserine occurs at positions 503 and 580. An OCEL domain is found at 526–636 (PDYLIKYIAI…LIGEFDQQQA (111 aa)).

It belongs to the ELL/occludin family. In terms of assembly, component of the super elongation complex (SEC), at least composed of EAF1, EAF2, CDK9, MLLT3/AF9, AFF (AFF1 or AFF4), the P-TEFb complex and ELL (ELL, ELL2 or ELL3). Component of the little elongation complex (LEC), at least composed of ELL (ELL, ELL2 or ELL3), ZC3H8, ICE1 and ICE2. Interacts with AFF4; the interaction is direct and leads to stabilize ELL2 and prevent ELL2 ubiquitination. Interacts with EAF1 and EAF2. Post-translationally, ubiquitinated by SIAH1, leading to its degradation by the proteasome. Interaction with AFF4 stabilizes ELL2 and prevents ELL2 ubiquitination.

It localises to the nucleus. Elongation factor component of the super elongation complex (SEC), a complex required to increase the catalytic rate of RNA polymerase II transcription by suppressing transient pausing by the polymerase at multiple sites along the DNA. Component of the little elongation complex (LEC), a complex required to regulate small nuclear RNA (snRNA) gene transcription by RNA polymerase II and III. Plays a role in immunoglobulin secretion in plasma cells: directs efficient alternative mRNA processing, influencing both proximal poly(A) site choice and exon skipping, as well as immunoglobulin heavy chain (IgH) alternative processing. Probably acts by regulating histone modifications accompanying transition from membrane-specific to secretory IgH mRNA expression. The sequence is that of RNA polymerase II elongation factor ELL2 (ELL2) from Homo sapiens (Human).